The following is a 274-amino-acid chain: MRKSMISFLEKKAKNEKITMVSAYDYHSARILDNSDIDIILVGDSLAMTVLGMQDTLSVTMDEMLIFTKAVSRGAKKSFVLADMPFMSYQSSDRDAILNASRFIKESHANGVKVEGGIEIASKIKLISQSGIPVVAHLGLTPQAVNMLGGYRVQGKDLQSAQKIIDDAKAVQDAGACMLVLECVPVKLAQKISSILEIPTIGIGSGKYCDGQVLVYHDLLGLNKDFKAKFVKHFDKIDPQVGVEKYRDEVKSGIFPSQEHSFDYLDDELLDKLY.

2 residues coordinate Mg(2+): Asp-44 and Asp-83. 3-methyl-2-oxobutanoate is bound by residues 44–45 (DS), Asp-83, and Lys-113. Glu-115 is a binding site for Mg(2+). Glu-182 acts as the Proton acceptor in catalysis.

The protein belongs to the PanB family. As to quaternary structure, homodecamer; pentamer of dimers. Mg(2+) serves as cofactor.

It localises to the cytoplasm. The enzyme catalyses 3-methyl-2-oxobutanoate + (6R)-5,10-methylene-5,6,7,8-tetrahydrofolate + H2O = 2-dehydropantoate + (6S)-5,6,7,8-tetrahydrofolate. It participates in cofactor biosynthesis; (R)-pantothenate biosynthesis; (R)-pantoate from 3-methyl-2-oxobutanoate: step 1/2. Functionally, catalyzes the reversible reaction in which hydroxymethyl group from 5,10-methylenetetrahydrofolate is transferred onto alpha-ketoisovalerate to form ketopantoate. The polypeptide is 3-methyl-2-oxobutanoate hydroxymethyltransferase (Campylobacter jejuni subsp. jejuni serotype O:6 (strain 81116 / NCTC 11828)).